The primary structure comprises 293 residues: Oxidoreductase clz16 (293 aa).

This sequence belongs to the asaB hydroxylase/desaturase family.

It participates in secondary metabolite biosynthesis. Functionally, oxidoreductase; part of the gene cluster that mediates the biosynthesis of squalestatin S1 (SQS1, also known as zaragozic acid A), a heavily oxidized fungal polyketide that offers potent cholesterol lowering activity by targeting squalene synthase (SS). SQS1 is composed of a 2,8-dioxobicyclic[3.2.1]octane-3,4,5-tricarboxyclic acid core that is connected to two lipophilic polyketide arms. These initial steps feature the priming of an unusual benzoic acid starter unit onto the highly reducing polyketide synthase clz14, followed by oxaloacetate extension and product release to generate a tricarboxylic acid containing product. The phenylalanine ammonia lyase (PAL) clz10 and the acyl-CoA ligase clz12 are involved in transforming phenylalanine into benzoyl-CoA. The citrate synthase-like protein clz17 is involved in connecting the C-alpha-carbons of the hexaketide chain and oxaloacetate to afford the tricarboxylic acid unit. The potential hydrolytic enzymes, clz11 and clz13, are in close proximity to pks2 and may participate in product release. On the other side, the tetraketide arm is synthesized by a the squalestatin tetraketide synthase clz2 and enzymatically esterified to the core in the last biosynthetic step, by the acetyltransferase clz6. The biosynthesis of the tetraketide must involve 3 rounds of chain extension. After the first and second rounds methyl-transfer occurs, and in all rounds of extension the ketoreductase and dehydratase are active. The enoyl reductase and C-MeT of clz2 are not active in the final round of extension. The acetyltransferase clz6 appears to have a broad substrate selectivity for its acyl CoA substrate, allowing the in vitro synthesis of novel squalestatins. The biosynthesis of SQS1 requires several oxidative steps likely performed by oxidoreductases clz3, clz15 and clz16. Finally, in support of the identification of the cluster as being responsible for SQS1 production, the cluster contains a gene encoding a putative squalene synthase (SS) clz20, suggesting a likely mechanism for self-resistance. This Cochliobolus lunatus (Filamentous fungus) protein is Oxidoreductase clz16.